Reading from the N-terminus, the 1295-residue chain is Phosphoribosylformylglycinamidine synthase (1295 aa).

The segment at 304–326 is disordered; sequence WPGAATGSGGEIRDEGATGRGAK. Residues 306–317, 385–387, and alanine 677 contribute to the ATP site; these read GAATGSGGEIRD and TGY. The Mg(2+) site is built by aspartate 678, glutamate 717, asparagine 721, and aspartate 884. Over residues 995-1012 the composition is skewed to basic and acidic residues; it reads LRDNPESADQEHASRQDD. The disordered stretch occupies residues 995–1017; sequence LRDNPESADQEHASRQDDNDPGL. The 254-residue stretch at 1042 to 1295 folds into the Glutamine amidotransferase type-1 domain; it reads VAVLREQGVN…LFRNARKQLG (254 aa). Residue cysteine 1135 is the Nucleophile of the active site. Catalysis depends on residues histidine 1260 and glutamate 1262.

This sequence in the N-terminal section; belongs to the FGAMS family. As to quaternary structure, monomer.

The protein localises to the cytoplasm. The enzyme catalyses N(2)-formyl-N(1)-(5-phospho-beta-D-ribosyl)glycinamide + L-glutamine + ATP + H2O = 2-formamido-N(1)-(5-O-phospho-beta-D-ribosyl)acetamidine + L-glutamate + ADP + phosphate + H(+). It functions in the pathway purine metabolism; IMP biosynthesis via de novo pathway; 5-amino-1-(5-phospho-D-ribosyl)imidazole from N(2)-formyl-N(1)-(5-phospho-D-ribosyl)glycinamide: step 1/2. In terms of biological role, phosphoribosylformylglycinamidine synthase involved in the purines biosynthetic pathway. Catalyzes the ATP-dependent conversion of formylglycinamide ribonucleotide (FGAR) and glutamine to yield formylglycinamidine ribonucleotide (FGAM) and glutamate. This chain is Phosphoribosylformylglycinamidine synthase, found in Sodalis glossinidius (strain morsitans).